The following is a 483-amino-acid chain: CdaA regulatory protein CdaR (483 aa).

The chain crosses the membrane as a helical span at residues 9–26 (WAVKIIALLFALLLYVAV). YbbR-like domains lie at 55 to 135 (IPVK…TVTI), 143 to 228 (FPVE…KITV), 237 to 316 (VPFK…TLHI), and 329 to 394 (VPIK…VNGP). A disordered region spans residues 410–483 (LTSKKSNTST…STANSQSSSE (74 aa)). The segment covering 413–430 (KKSNTSTNDNSSNTSGNQ) has biased composition (low complexity). Residues 431-454 (DTDKQTNDQKNNQQEDTKNTDKNN) show a composition bias toward basic and acidic residues.

In terms of assembly, interacts with CdaA.

Its subcellular location is the cell membrane. In terms of biological role, upon coexpression in E.coli stimulates the diadenylate cyclase activity of CdaA about 20-fold. In B.subtilis c-di-AMP is a second messenger that mediates growth, DNA repair and cell wall homeostasis; it is toxic when present in excess. The protein is CdaA regulatory protein CdaR of Bacillus subtilis (strain 168).